A 320-amino-acid polypeptide reads, in one-letter code: G-protein coupled receptor homolog FPV021 (320 aa).

Residues 1 to 18 are Extracellular-facing; it reads MDTDYGTVHTQQSVKGNT. The helical transmembrane segment at 19-39 threads the bilayer; that stretch reads LILLIYFISFIVGFPGNCTVI. Residues 40-52 are Cytoplasmic-facing; it reads WFTGYRWKKSVTT. A helical membrane pass occupies residues 53–73; it reads IWFLNLAIADTLFVIFIPFEI. At 74-91 the chain is on the extracellular side; sequence TYILMGHYWPFGLFVCRI. Cysteine 89 and cysteine 167 are disulfide-bonded. Residues 92–112 traverse the membrane as a helical segment; sequence GSLMFNTGMYASIFFLTFISI. Residues 113 to 133 are Cytoplasmic-facing; that stretch reads DRYCLAFRRDICNKYRYRINI. Residues 134-154 form a helical membrane-spanning segment; it reads MVMIIISWIISILLSTPYMYF. Residues 155–188 lie on the Extracellular side of the membrane; the sequence is KNTNEKYRNNRDCLEDYHSDNNTYLLRRVVFCIS. N-linked (GlcNAc...) asparagine; by host glycosylation is present at asparagine 175. A helical membrane pass occupies residues 189–209; that stretch reads LVMRYLVPSVVMLFCYCLLLF. Residues 210 to 222 lie on the Cytoplasmic side of the membrane; it reads KHSLFLSKGQTYT. The helical transmembrane segment at 223–243 threads the bilayer; it reads IVIMITSFMVLWTPYNILYFI. Topologically, residues 244-260 are extracellular; the sequence is DVIGSHYYNADTIIDAA. Residues 261–281 form a helical membrane-spanning segment; sequence PISISLIFLSSSINPMIYMLV. Residues 282 to 320 lie on the Cytoplasmic side of the membrane; the sequence is GRYVSFENYSMRESLKLILSEERDNQTNHENEIKMENIN.

This sequence belongs to the G-protein coupled receptor 1 family.

It is found in the host cell membrane. The polypeptide is G-protein coupled receptor homolog FPV021 (Vertebrata (FPV)).